The sequence spans 616 residues: Methylmalonyl-CoA mutase small subunit (616 aa).

The protein belongs to the methylmalonyl-CoA mutase family. As to quaternary structure, heterodimer of an alpha and a beta chain. Adenosylcob(III)alamin is required as a cofactor.

The enzyme catalyses (R)-methylmalonyl-CoA = succinyl-CoA. It functions in the pathway metabolic intermediate metabolism; propanoyl-CoA degradation; succinyl-CoA from propanoyl-CoA: step 3/3. Its function is as follows. Catalyzes the isomerization of succinyl-CoA to methylmalonyl-CoA during synthesis of propionate from tricarboxylic acid-cycle intermediates. This conversion most likely represents an important source of building blocks for polyketide antibiotic biosynthesis. It is unable to catalyze the conversion of isobutyryl-CoA into N-butyryl-CoA. This is Methylmalonyl-CoA mutase small subunit (mutA) from Streptomyces virginiae (Streptomyces cinnamonensis).